The chain runs to 263 residues: Linear gramicidin dehydrogenase LgrE (263 aa).

S96 is an active-site residue.

It belongs to the thioesterase family.

Its function is as follows. In the final step of gramicidin biosynthesis, reduces the pentadecapeptide-aldehyde intermediate, that is released from the terminal module of the non-ribosomal peptide synthetase LgrD, to the final product ethanolamine-containing gramicidin. In Brevibacillus parabrevis, this protein is Linear gramicidin dehydrogenase LgrE (lgrE).